The following is a 43-amino-acid chain: Protein PsbN (43 aa).

The helical transmembrane segment at 5 to 27 (TFLSIFISAALLGITGYSIYTAF) threads the bilayer.

The protein belongs to the PsbN family.

It is found in the plastid. The protein localises to the cyanelle thylakoid membrane. Functionally, may play a role in photosystem I and II biogenesis. In Cyanophora paradoxa, this protein is Protein PsbN.